A 138-amino-acid chain; its full sequence is MKPAARRRARECAVQALYSWQLSKNDIADVEHQFLSEQDVKDVDIVYFRELLSGVAVNAGLLDSLMAPVLSRQLEELGQVERAVLRIALYELKMREDVPYKVAINEAIELAKTFGAEDSHKFVNGVLDKVAPSIRKKK.

The protein belongs to the NusB family.

In terms of biological role, involved in transcription antitermination. Required for transcription of ribosomal RNA (rRNA) genes. Binds specifically to the boxA antiterminator sequence of the ribosomal RNA (rrn) operons. This is Transcription antitermination protein NusB from Serratia proteamaculans (strain 568).